The primary structure comprises 298 residues: 3'-5' exonuclease crn-4 (298 aa).

One can recognise an Exonuclease domain in the interval 12–192 (LILDFETTSD…DDCLNIATIL (181 aa)). 3 residues coordinate Mg(2+): aspartate 15, glutamate 17, and aspartate 184. Zn(2+) contacts are provided by cysteine 210, cysteine 260, cysteine 263, and cysteine 270.

As to quaternary structure, homodimer (via C-terminus). Interacts with crn-5; interaction promotes the DNase activity of crn-4. Interacts with cps-6, crn-1 and cyn-13. Mg(2+) is required as a cofactor.

With respect to regulation, exonuclease activity is inhibited in vitro by pontacyl violet 6R (PV6R), p-chloromercuriphenyl sulfonate (PCMPS), 5,5'-dithiobis(2-nitrobenzoic acid) (DTNB), aurintricarboxylic acid (ATA), 2-morpholin-4-ylethanesulfonate (MES), 4-[(4,6-dichloro-1,3,5-triazin-2-yl)amino]-2-(3-hydroxy-6-oxoxanthen-9-yl)benzoic acid (DR396) and fmoc-d-Cha-OH (FDCO). Interaction with ssRNA is reduced in vitro by PV6R. In terms of biological role, possesses 3'-&gt;5' exoribonuclease activity in digestion of DNA and RNA. Cleaves nucleic acid substrates with efficiencies in the following order: single-stranded RNA (ssRNA) &gt; double-stranded DNA (dsDNA) &gt; single-stranded DNA (ssDNA). Involved in apoptotic DNA degradation. The polypeptide is 3'-5' exonuclease crn-4 (crn-4) (Caenorhabditis elegans).